A 347-amino-acid chain; its full sequence is Holliday junction branch migration complex subunit RuvB (347 aa).

The large ATPase domain (RuvB-L) stretch occupies residues 1 to 183 (MSDERVVTPR…FGSVHRLEFY (183 aa)). ATP-binding positions include L22, R23, G64, K67, T68, S69, 130–132 (EDF), R173, Y183, and R220. Residue T68 participates in Mg(2+) binding. Residues 184–254 (SVDALYEIVM…VARDALAKLE (71 aa)) are small ATPAse domain (RuvB-S). Residues 257-347 (HLGLDENDRR…NGAEQGRLWT (91 aa)) form a head domain (RuvB-H) region. 2 residues coordinate DNA: R312 and R317.

This sequence belongs to the RuvB family. As to quaternary structure, homohexamer. Forms an RuvA(8)-RuvB(12)-Holliday junction (HJ) complex. HJ DNA is sandwiched between 2 RuvA tetramers; dsDNA enters through RuvA and exits via RuvB. An RuvB hexamer assembles on each DNA strand where it exits the tetramer. Each RuvB hexamer is contacted by two RuvA subunits (via domain III) on 2 adjacent RuvB subunits; this complex drives branch migration. In the full resolvosome a probable DNA-RuvA(4)-RuvB(12)-RuvC(2) complex forms which resolves the HJ.

It localises to the cytoplasm. The enzyme catalyses ATP + H2O = ADP + phosphate + H(+). Its function is as follows. The RuvA-RuvB-RuvC complex processes Holliday junction (HJ) DNA during genetic recombination and DNA repair, while the RuvA-RuvB complex plays an important role in the rescue of blocked DNA replication forks via replication fork reversal (RFR). RuvA specifically binds to HJ cruciform DNA, conferring on it an open structure. The RuvB hexamer acts as an ATP-dependent pump, pulling dsDNA into and through the RuvAB complex. RuvB forms 2 homohexamers on either side of HJ DNA bound by 1 or 2 RuvA tetramers; 4 subunits per hexamer contact DNA at a time. Coordinated motions by a converter formed by DNA-disengaged RuvB subunits stimulates ATP hydrolysis and nucleotide exchange. Immobilization of the converter enables RuvB to convert the ATP-contained energy into a lever motion, pulling 2 nucleotides of DNA out of the RuvA tetramer per ATP hydrolyzed, thus driving DNA branch migration. The RuvB motors rotate together with the DNA substrate, which together with the progressing nucleotide cycle form the mechanistic basis for DNA recombination by continuous HJ branch migration. Branch migration allows RuvC to scan DNA until it finds its consensus sequence, where it cleaves and resolves cruciform DNA. In Roseiflexus castenholzii (strain DSM 13941 / HLO8), this protein is Holliday junction branch migration complex subunit RuvB.